The following is a 62-amino-acid chain: Large ribosomal subunit protein bL28 (62 aa).

It belongs to the bacterial ribosomal protein bL28 family.

The protein is Large ribosomal subunit protein bL28 of Acetivibrio thermocellus (strain ATCC 27405 / DSM 1237 / JCM 9322 / NBRC 103400 / NCIMB 10682 / NRRL B-4536 / VPI 7372) (Clostridium thermocellum).